Consider the following 481-residue polypeptide: UDP-N-acetylmuramoyl-L-alanyl-D-glutamate--L-lysine ligase (481 aa).

Residue S42 participates in UDP-N-acetyl-alpha-D-muramoyl-L-alanyl-D-glutamate binding. Residue 118–124 (GTKGKTT) participates in ATP binding. Residues Q158, 160 to 161 (TT), S187, and R195 contribute to the UDP-N-acetyl-alpha-D-muramoyl-L-alanyl-D-glutamate site. Position 229 is an N6-carboxylysine (K229). An L-lysine recognition motif motif is present at residues 404-407 (DDPN).

This sequence belongs to the MurCDEF family. MurE subfamily. Carboxylation is probably crucial for Mg(2+) binding and, consequently, for the gamma-phosphate positioning of ATP.

It localises to the cytoplasm. It carries out the reaction UDP-N-acetyl-alpha-D-muramoyl-L-alanyl-D-glutamate + L-lysine + ATP = UDP-N-acetyl-alpha-D-muramoyl-L-alanyl-gamma-D-glutamyl-L-lysine + ADP + phosphate + H(+). It participates in cell wall biogenesis; peptidoglycan biosynthesis. Functionally, catalyzes the addition of L-lysine to the nucleotide precursor UDP-N-acetylmuramoyl-L-alanyl-D-glutamate (UMAG) in the biosynthesis of bacterial cell-wall peptidoglycan. The protein is UDP-N-acetylmuramoyl-L-alanyl-D-glutamate--L-lysine ligase of Streptococcus pyogenes serotype M18 (strain MGAS8232).